We begin with the raw amino-acid sequence, 284 residues long: tRNA-cytidine(32) 2-sulfurtransferase (284 aa).

Positions 44 to 49 match the PP-loop motif motif; the sequence is SGGKDS. Cys119, Cys122, and Cys210 together coordinate [4Fe-4S] cluster.

It belongs to the TtcA family. Homodimer. Mg(2+) is required as a cofactor. Requires [4Fe-4S] cluster as cofactor.

The protein resides in the cytoplasm. The catalysed reaction is cytidine(32) in tRNA + S-sulfanyl-L-cysteinyl-[cysteine desulfurase] + AH2 + ATP = 2-thiocytidine(32) in tRNA + L-cysteinyl-[cysteine desulfurase] + A + AMP + diphosphate + H(+). It participates in tRNA modification. In terms of biological role, catalyzes the ATP-dependent 2-thiolation of cytidine in position 32 of tRNA, to form 2-thiocytidine (s(2)C32). The sulfur atoms are provided by the cysteine/cysteine desulfurase (IscS) system. The polypeptide is tRNA-cytidine(32) 2-sulfurtransferase (Chromohalobacter salexigens (strain ATCC BAA-138 / DSM 3043 / CIP 106854 / NCIMB 13768 / 1H11)).